The following is a 348-amino-acid chain: MALVPTPVVNEGPMFAEVDMGDNSSTPTVRATVVQASTIFYDTPATLDKAERLLAEAASYGAQLVVFPEAFIGGYPRGSTFGVSIGNRTAKGKEEFRKYHASAIDVPGPEVDRLAAMAGKYKVYLVMGVIERDGYTLYCTVLFFDSQGHYLGKHRKIMPTALERIIWGFGDGSTIPVYDTPLGKIGAAICWENRMPLLRTAMYAKGIEIYCAPTADSRDVWQASMTHIALEGGCFVLSANQFCRRKDYPPPPEYVFSGTEDLTPDSIVCAGGSVIISPSGAVLAGPNYEGEALISADLDLGEIARAKFDFDVVGHYARPEVLSLIVRDHAVSPVSFTSTSSKAESSPK.

In terms of domain architecture, CN hydrolase spans 29–300; that stretch reads VRATVVQAST…EALISADLDL (272 aa). Glu-69 (proton acceptor) is an active-site residue. Lys-156 serves as the catalytic Proton donor. The active-site Nucleophile is the Cys-190.

Belongs to the carbon-nitrogen hydrolase superfamily. Nitrilase family. Expressed in roots, stems, cotyledons, leaves and flowers.

The catalysed reaction is a nitrile + 2 H2O = a carboxylate + NH4(+). It carries out the reaction 3-cyano-L-alanine + 2 H2O = L-aspartate + NH4(+). Its function is as follows. Highly specific for beta-cyano-L-alanine (Ala(CN)). Low activity with 3-phenylpropionitrile (PPN). Not associated with auxin production but may be involved in cyanide detoxification. The chain is Bifunctional nitrilase/nitrile hydratase NIT4B (NIT4B) from Nicotiana tabacum (Common tobacco).